Here is a 72-residue protein sequence, read N- to C-terminus: Small ribosomal subunit protein bS18c (72 aa).

This sequence belongs to the bacterial ribosomal protein bS18 family. In terms of assembly, part of the 30S ribosomal subunit.

Its subcellular location is the plastid. The protein resides in the chloroplast. The chain is Small ribosomal subunit protein bS18c from Phaeodactylum tricornutum (strain CCAP 1055/1).